Here is a 233-residue protein sequence, read N- to C-terminus: Small ribosomal subunit protein uS2 (233 aa).

The protein belongs to the universal ribosomal protein uS2 family.

This Clostridium botulinum (strain Alaska E43 / Type E3) protein is Small ribosomal subunit protein uS2.